We begin with the raw amino-acid sequence, 156 residues long: SsrA-binding protein (156 aa).

This sequence belongs to the SmpB family.

Its subcellular location is the cytoplasm. In terms of biological role, required for rescue of stalled ribosomes mediated by trans-translation. Binds to transfer-messenger RNA (tmRNA), required for stable association of tmRNA with ribosomes. tmRNA and SmpB together mimic tRNA shape, replacing the anticodon stem-loop with SmpB. tmRNA is encoded by the ssrA gene; the 2 termini fold to resemble tRNA(Ala) and it encodes a 'tag peptide', a short internal open reading frame. During trans-translation Ala-aminoacylated tmRNA acts like a tRNA, entering the A-site of stalled ribosomes, displacing the stalled mRNA. The ribosome then switches to translate the ORF on the tmRNA; the nascent peptide is terminated with the 'tag peptide' encoded by the tmRNA and targeted for degradation. The ribosome is freed to recommence translation, which seems to be the essential function of trans-translation. The sequence is that of SsrA-binding protein from Bacillus velezensis (strain DSM 23117 / BGSC 10A6 / LMG 26770 / FZB42) (Bacillus amyloliquefaciens subsp. plantarum).